A 346-amino-acid polypeptide reads, in one-letter code: Ketol-acid reductoisomerase (NADP(+)) (346 aa).

One can recognise a KARI N-terminal Rossmann domain in the interval 1 to 189 (MQVYYDRDAD…GGGRSGIIET (189 aa)). NADP(+) is bound by residues 24–27 (YGSQ), R48, S51, T53, and 83–86 (DEHQ). H108 is a catalytic residue. G134 is a binding site for NADP(+). The KARI C-terminal knotted domain maps to 190-335 (TFKEECETDL…EKLRAMMPWI (146 aa)). Residues D198, E202, E234, and E238 each coordinate Mg(2+). Substrate is bound at residue S259.

Belongs to the ketol-acid reductoisomerase family. Mg(2+) serves as cofactor.

It carries out the reaction (2R)-2,3-dihydroxy-3-methylbutanoate + NADP(+) = (2S)-2-acetolactate + NADPH + H(+). The enzyme catalyses (2R,3R)-2,3-dihydroxy-3-methylpentanoate + NADP(+) = (S)-2-ethyl-2-hydroxy-3-oxobutanoate + NADPH + H(+). It functions in the pathway amino-acid biosynthesis; L-isoleucine biosynthesis; L-isoleucine from 2-oxobutanoate: step 2/4. The protein operates within amino-acid biosynthesis; L-valine biosynthesis; L-valine from pyruvate: step 2/4. Functionally, involved in the biosynthesis of branched-chain amino acids (BCAA). Catalyzes an alkyl-migration followed by a ketol-acid reduction of (S)-2-acetolactate (S2AL) to yield (R)-2,3-dihydroxy-isovalerate. In the isomerase reaction, S2AL is rearranged via a Mg-dependent methyl migration to produce 3-hydroxy-3-methyl-2-ketobutyrate (HMKB). In the reductase reaction, this 2-ketoacid undergoes a metal-dependent reduction by NADPH to yield (R)-2,3-dihydroxy-isovalerate. The chain is Ketol-acid reductoisomerase (NADP(+)) from Sphingopyxis alaskensis (strain DSM 13593 / LMG 18877 / RB2256) (Sphingomonas alaskensis).